We begin with the raw amino-acid sequence, 288 residues long: 4-diphosphocytidyl-2-C-methyl-D-erythritol kinase (288 aa).

Lysine 8 is an active-site residue. An ATP-binding site is contributed by proline 92–threonine 102. Aspartate 134 is an active-site residue.

This sequence belongs to the GHMP kinase family. IspE subfamily.

The catalysed reaction is 4-CDP-2-C-methyl-D-erythritol + ATP = 4-CDP-2-C-methyl-D-erythritol 2-phosphate + ADP + H(+). It participates in isoprenoid biosynthesis; isopentenyl diphosphate biosynthesis via DXP pathway; isopentenyl diphosphate from 1-deoxy-D-xylulose 5-phosphate: step 3/6. Functionally, catalyzes the phosphorylation of the position 2 hydroxy group of 4-diphosphocytidyl-2C-methyl-D-erythritol. This is 4-diphosphocytidyl-2-C-methyl-D-erythritol kinase from Clostridium perfringens (strain SM101 / Type A).